Consider the following 815-residue polypeptide: Leucine--tRNA ligase (815 aa).

Positions 40–50 (PYPSGRIHMGH) match the 'HIGH' region motif. Residues 583-587 (KMSKS) carry the 'KMSKS' region motif. Lys586 is a binding site for ATP.

It belongs to the class-I aminoacyl-tRNA synthetase family.

It localises to the cytoplasm. The catalysed reaction is tRNA(Leu) + L-leucine + ATP = L-leucyl-tRNA(Leu) + AMP + diphosphate. The protein is Leucine--tRNA ligase of Nitratiruptor sp. (strain SB155-2).